Reading from the N-terminus, the 477-residue chain is Glycogen synthase (477 aa).

Lysine 15 provides a ligand contact to ADP-alpha-D-glucose.

It belongs to the glycosyltransferase 1 family. Bacterial/plant glycogen synthase subfamily.

The enzyme catalyses [(1-&gt;4)-alpha-D-glucosyl](n) + ADP-alpha-D-glucose = [(1-&gt;4)-alpha-D-glucosyl](n+1) + ADP + H(+). Its pathway is glycan biosynthesis; glycogen biosynthesis. Functionally, synthesizes alpha-1,4-glucan chains using ADP-glucose. This Salmonella typhi protein is Glycogen synthase.